A 494-amino-acid polypeptide reads, in one-letter code: V-type proton ATPase subunit B (494 aa).

Arg384 serves as a coordination point for ATP.

It belongs to the ATPase alpha/beta chains family. As to quaternary structure, V-ATPase is a heteromultimeric enzyme made up of two complexes: the ATP-hydrolytic V1 complex and the proton translocation V0 complex. The V1 complex consists of three catalytic AB heterodimers that form a heterohexamer, three peripheral stalks each consisting of EG heterodimers, one central rotor including subunits D and F, and the regulatory subunits C and H. The proton translocation complex V0 consists of the proton transport subunit a, a ring of proteolipid subunits c9c'', rotary subunit d, subunits e and f, and the accessory subunits VhaAC45 and ATP6AP2.

Non-catalytic subunit of the V1 complex of vacuolar(H+)-ATPase (V-ATPase), a multisubunit enzyme composed of a peripheral complex (V1) that hydrolyzes ATP and a membrane integral complex (V0) that translocates protons. V-ATPase is responsible for acidifying and maintaining the pH of intracellular compartments and in some cell types, is targeted to the plasma membrane, where it is responsible for acidifying the extracellular environment. Essential for the proper assembly and activity of V-ATPase. The sequence is that of V-type proton ATPase subunit B (VHA55) from Manduca sexta (Tobacco hawkmoth).